A 396-amino-acid chain; its full sequence is 1-deoxy-D-xylulose 5-phosphate reductoisomerase (396 aa).

NADPH-binding residues include T13, G14, S15, V16, and N127. K128 serves as a coordination point for 1-deoxy-D-xylulose 5-phosphate. E129 is a binding site for NADPH. D153 contributes to the Mn(2+) binding site. Residues S154, E155, S184, and H207 each contribute to the 1-deoxy-D-xylulose 5-phosphate site. E155 contacts Mn(2+). G213 serves as a coordination point for NADPH. 1-deoxy-D-xylulose 5-phosphate contacts are provided by S220, N225, K226, and E229. Position 229 (E229) interacts with Mn(2+).

The protein belongs to the DXR family. It depends on Mg(2+) as a cofactor. Mn(2+) is required as a cofactor.

The catalysed reaction is 2-C-methyl-D-erythritol 4-phosphate + NADP(+) = 1-deoxy-D-xylulose 5-phosphate + NADPH + H(+). Its pathway is isoprenoid biosynthesis; isopentenyl diphosphate biosynthesis via DXP pathway; isopentenyl diphosphate from 1-deoxy-D-xylulose 5-phosphate: step 1/6. Its function is as follows. Catalyzes the NADPH-dependent rearrangement and reduction of 1-deoxy-D-xylulose-5-phosphate (DXP) to 2-C-methyl-D-erythritol 4-phosphate (MEP). This Pseudomonas fluorescens (strain SBW25) protein is 1-deoxy-D-xylulose 5-phosphate reductoisomerase.